Reading from the N-terminus, the 223-residue chain is Neurotrophic factor BDNF precursor form (223 aa).

The N-terminal stretch at 1-5 (SCMKA) is a signal peptide. A propeptide spanning residues 6–114 (APMKEVSLRG…AANMSMRVRR (109 aa)) is cleaved from the precursor. Residue N107 is glycosylated (N-linked (GlcNAc...) asparagine). 2 cysteine pairs are disulfide-bonded: C127–C194 and C172–C223.

The protein belongs to the NGF-beta family.

Its subcellular location is the secreted. In terms of biological role, promotes the survival of neuronal populations that are all located either in the central nervous system or directly connected to it. In Ramphotyphlops sp. (strain YPM 13663) (Blind snake), this protein is Neurotrophic factor BDNF precursor form (BDNF).